The following is a 433-amino-acid chain: Glutamate-1-semialdehyde 2,1-aminomutase (433 aa).

Position 273 is an N6-(pyridoxal phosphate)lysine (Lys273).

The protein belongs to the class-III pyridoxal-phosphate-dependent aminotransferase family. HemL subfamily. As to quaternary structure, homodimer. Pyridoxal 5'-phosphate is required as a cofactor.

Its subcellular location is the cytoplasm. It carries out the reaction (S)-4-amino-5-oxopentanoate = 5-aminolevulinate. Its pathway is porphyrin-containing compound metabolism; protoporphyrin-IX biosynthesis; 5-aminolevulinate from L-glutamyl-tRNA(Glu): step 2/2. In Polynucleobacter necessarius subsp. necessarius (strain STIR1), this protein is Glutamate-1-semialdehyde 2,1-aminomutase.